We begin with the raw amino-acid sequence, 53 residues long: MLFKSIISLSNSSKSLNNKINNDNENNNLEFSSNKTTINPYSVFSYSRPLWNC.

This is an uncharacterized protein from Dictyostelium discoideum (Social amoeba).